The primary structure comprises 341 residues: MRVIFSEDHKLRNAKTELYGGELVPPFEAPFRAEWILAAVKEAGFDDVVAPARHGLETVLKVHDAGYLNFLETAWDRWKAAGYKGEAIATSFPVRRTSPRIPTDIEGQIGYYCNAAETAISPGTWEAALSSMASAIDGADLIAAGHKAAFSLCRPPGHHAGIDMFGGYCFINNAAVAAQRLLDKGAKKIAILDVDFHHGNGTQDIFYERGDVFFASLHGDPAEAFPHFLGYAEETGKGAGAGTTANYPMGRGTPYSVWGEALTDSLKRIAAFGAEAIVVSLGVDTFEQDPISFFKLTSPDYITMGRTIAASGVPLLVVMEGGYGVPEIGLNVANVLKGVAG.

Residues Tyr19, Glu106, and Glu117 each coordinate substrate. His159 serves as the catalytic Proton donor/acceptor. The Zn(2+) site is built by Asp195, His197, and Asp284. Tyr323 provides a ligand contact to substrate.

Belongs to the histone deacetylase family. In terms of assembly, homodimer. Zn(2+) is required as a cofactor.

The enzyme catalyses N-acetylputrescine + H2O = putrescine + acetate. The catalysed reaction is N-acetylcadaverine + H2O = cadaverine + acetate. It carries out the reaction N(1)-acetylspermine + H2O = spermine + acetate. It catalyses the reaction N(1)-acetylspermidine + H2O = spermidine + acetate. The enzyme catalyses N(8)-acetylspermidine + H2O = spermidine + acetate. It participates in amine and polyamine metabolism. Zinc ions inhibit enzyme activity in a dose-dependent manner. Inhibited by KCl at concentrations above 10 mM. Inhibited by o-oxyquinoline in vitro, suggesting that it is a metalloprotein. Inhibited by various substrate N(8)-acetylspermidine analogs bearing different metal-binding groups such as trifluoromethylketone, thiol, or hydroxamate, and by hydroxamate analogs of short-chain acetyldiamines. In terms of biological role, involved in polyamine metabolism. Catalyzes the deacetylation of various acetylated polyamines such as N-acetylputrescine, N-acetylcadaverine, N(1)-acetylspermine, N(1)-acetylspermidine and N(8)-acetylspermidine. In vitro, is also able to deacetylate L-Lys(epsilon-acetyl)coumarin, but has very low activity towards the larger tetrapeptide N-acetyl-L-Arg-L-His-L-Lys(epsilon-acetyl)-L-Lys(epsilon-acetyl)coumarin. This chain is Acetylpolyamine amidohydrolase, found in Mycoplana ramosa (Mycoplana bullata).